The following is a 2531-amino-acid chain: Neurogenic locus notch homolog protein 1 (2531 aa).

The signal sequence occupies residues methionine 1–alanine 18. The Extracellular portion of the chain corresponds to alanine 19–histidine 1725. EGF-like domains lie at arginine 20 to glutamine 58, aspartate 59 to leucine 99, leucine 102 to glutamine 139, and glutamine 140 to arginine 176. 32 cysteine pairs are disulfide-bonded: cysteine 24/cysteine 37, cysteine 31/cysteine 46, cysteine 63/cysteine 74, cysteine 68/cysteine 87, cysteine 89/cysteine 98, cysteine 106/cysteine 117, cysteine 111/cysteine 127, cysteine 129/cysteine 138, cysteine 144/cysteine 155, cysteine 149/cysteine 164, cysteine 166/cysteine 175, cysteine 182/cysteine 195, cysteine 189/cysteine 204, cysteine 206/cysteine 215, cysteine 222/cysteine 233, cysteine 227/cysteine 243, cysteine 245/cysteine 254, cysteine 261/cysteine 272, cysteine 266/cysteine 281, cysteine 283/cysteine 292, cysteine 299/cysteine 312, cysteine 306/cysteine 321, cysteine 323/cysteine 332, cysteine 339/cysteine 350, cysteine 344/cysteine 359, cysteine 361/cysteine 370, cysteine 376/cysteine 387, cysteine 381/cysteine 398, cysteine 400/cysteine 409, cysteine 416/cysteine 429, cysteine 423/cysteine 438, and cysteine 440/cysteine 449. Serine 65 carries an O-linked (Glc...) serine glycan. An O-linked (Fuc...) threonine glycan is attached at threonine 73. The O-linked (Fuc...) threonine glycan is linked to threonine 116. A glycan (O-linked (Glc...) serine) is linked at serine 146. Residues aspartate 178 to glutamate 216 enclose the EGF-like 5; calcium-binding domain. O-linked (Fuc...) threonine glycosylation is present at threonine 194. The EGF-like 6 domain maps to proline 218 to glutamate 255. An O-linked (Fuc...) threonine; alternate glycan is attached at threonine 232. The O-linked (GalNAc...) threonine; alternate glycan is linked to threonine 232. The EGF-like 7; calcium-binding domain occupies asparagine 257–threonine 293. The EGF-like 8; calcium-binding domain occupies aspartate 295–serine 333. Threonine 311 is a glycosylation site (O-linked (Fuc...) threonine). Residues asparagine 335–histidine 371 form the EGF-like 9; calcium-binding domain. An O-linked (Glc...) serine glycan is attached at serine 341. A glycan (O-linked (Fuc...) threonine) is linked at threonine 349. In terms of domain architecture, EGF-like 10; calcium-binding spans leucine 372–serine 410. Serine 378 carries O-linked (Glc...) serine glycosylation. The EGF-like 11; calcium-binding domain maps to aspartate 412–glutamate 450. The segment at alanine 420 to asparagine 421 is interaction with DLL4. Residues threonine 432 and serine 435 each contribute to the Ca(2+) site. O-linked (Glc...) serine glycosylation is present at serine 435. Residues arginine 448–aspartate 452 are interaction with DLL4. The Ca(2+) site is built by aspartate 452, valine 453, and glutamate 455. The EGF-like 12; calcium-binding domain maps to aspartate 452–glutamate 488. Disulfide bonds link cysteine 456-cysteine 467, cysteine 461-cysteine 476, and cysteine 478-cysteine 487. O-linked (Glc...) serine glycosylation is present at serine 458. A glycan (O-linked (Fuc...) threonine) is linked at threonine 466. Residues aspartate 469 and glutamine 470 each contribute to the Ca(2+) site. Ca(2+) is bound by residues asparagine 490, threonine 491, and glutamate 493. Residues asparagine 490–glutamine 526 enclose the EGF-like 13; calcium-binding domain. 75 disulfide bridges follow: cysteine 494–cysteine 505, cysteine 499–cysteine 514, cysteine 516–cysteine 525, cysteine 532–cysteine 543, cysteine 537–cysteine 552, cysteine 554–cysteine 563, cysteine 570–cysteine 580, cysteine 575–cysteine 589, cysteine 591–cysteine 600, cysteine 607–cysteine 618, cysteine 612–cysteine 627, cysteine 629–cysteine 638, cysteine 645–cysteine 655, cysteine 650–cysteine 664, cysteine 666–cysteine 675, cysteine 682–cysteine 693, cysteine 687–cysteine 702, cysteine 704–cysteine 713, cysteine 720–cysteine 730, cysteine 725–cysteine 739, cysteine 741–cysteine 750, cysteine 757–cysteine 768, cysteine 762–cysteine 777, cysteine 779–cysteine 788, cysteine 795–cysteine 806, cysteine 800–cysteine 815, cysteine 817–cysteine 826, cysteine 833–cysteine 844, cysteine 838–cysteine 855, cysteine 857–cysteine 866, cysteine 873–cysteine 884, cysteine 878–cysteine 893, cysteine 895–cysteine 904, cysteine 911–cysteine 922, cysteine 916–cysteine 931, cysteine 933–cysteine 942, cysteine 949–cysteine 960, cysteine 954–cysteine 969, cysteine 971–cysteine 980, cysteine 987–cysteine 998, cysteine 992–cysteine 1007, cysteine 1009–cysteine 1018, cysteine 1025–cysteine 1036, cysteine 1030–cysteine 1045, cysteine 1047–cysteine 1056, cysteine 1063–cysteine 1074, cysteine 1068–cysteine 1083, cysteine 1085–cysteine 1094, cysteine 1101–cysteine 1122, cysteine 1116–cysteine 1131, cysteine 1133–cysteine 1142, cysteine 1149–cysteine 1160, cysteine 1154–cysteine 1169, cysteine 1171–cysteine 1180, cysteine 1187–cysteine 1198, cysteine 1192–cysteine 1207, cysteine 1209–cysteine 1218, cysteine 1225–cysteine 1244, cysteine 1238–cysteine 1253, cysteine 1255–cysteine 1264, cysteine 1271–cysteine 1284, cysteine 1276–cysteine 1293, cysteine 1295–cysteine 1304, cysteine 1311–cysteine 1322, cysteine 1316–cysteine 1334, cysteine 1336–cysteine 1345, cysteine 1352–cysteine 1363, cysteine 1357–cysteine 1372, cysteine 1374–cysteine 1383, cysteine 1391–cysteine 1403, cysteine 1397–cysteine 1414, cysteine 1416–cysteine 1425, cysteine 1449–cysteine 1472, cysteine 1454–cysteine 1467, and cysteine 1463–cysteine 1479. A glycan (O-linked (Glc...) serine) is linked at serine 496. Ca(2+) is bound by residues aspartate 507 and lysine 508. The region spanning aspartate 528–glutamate 564 is the EGF-like 14; calcium-binding domain. An O-linked (Glc...) serine glycan is attached at serine 534. Positions aspartate 566–glutamate 601 constitute an EGF-like 15; calcium-binding domain. The EGF-like 16; calcium-binding domain occupies asparagine 603–glutamate 639. Residue serine 609 is glycosylated (O-linked (Glc...) serine). Threonine 617 is a glycosylation site (O-linked (Fuc...) threonine). The EGF-like 17; calcium-binding domain maps to asparagine 641–asparagine 676. Residue serine 647 is glycosylated (O-linked (Glc...) serine). The EGF-like 18; calcium-binding domain occupies asparagine 678–leucine 714. Threonine 692 is a glycosylation site (O-linked (Fuc...) threonine). Residues glutamate 716 to aspartate 751 form the EGF-like 19; calcium-binding domain. Serine 722 carries an O-linked (Glc...) serine glycan. The 37-residue stretch at asparagine 753–glutamine 789 folds into the EGF-like 20; calcium-binding domain. A glycan (O-linked (Glc...) serine) is linked at serine 759. An O-linked (Fuc...) threonine glycan is attached at threonine 767. O-linked (GlcNAc) serine glycosylation occurs at serine 784. Positions asparagine 791–glutamate 827 constitute an EGF-like 21; calcium-binding domain. Serine 797 is a glycosylation site (O-linked (Glc...) serine). O-linked (Fuc...) threonine glycosylation is present at threonine 805. One can recognise an EGF-like 22 domain in the interval valine 829–glutamate 867. The region spanning aspartate 869–glutamate 905 is the EGF-like 23; calcium-binding domain. An N-linked (GlcNAc...) asparagine glycan is attached at asparagine 888. Residue threonine 900 is glycosylated (O-linked (GlcNAc) threonine). The EGF-like 24 domain occupies aspartate 907–glutamate 943. Serine 921 is a glycosylation site (O-linked (Fuc) serine). Residues aspartate 945–glutamate 981 form the EGF-like 25; calcium-binding domain. A glycan (O-linked (Glc...) serine) is linked at serine 951. N-linked (GlcNAc...) asparagine glycosylation occurs at asparagine 959. Residues asparagine 983 to glutamine 1019 form the EGF-like 26 domain. O-linked (Fuc...) threonine glycosylation occurs at threonine 997. An EGF-like 27; calcium-binding domain is found at aspartate 1021–glutamine 1057. O-linked (Glc...) serine glycosylation occurs at serine 1027. Residue threonine 1035 is glycosylated (O-linked (Fuc...) threonine). 2 EGF-like domains span residues leucine 1059–aspartate 1095 and leucine 1097–glutamate 1143. A glycan (O-linked (Glc...) serine) is linked at serine 1065. Residues glutamate 1145–serine 1181 enclose the EGF-like 30; calcium-binding domain. Threonine 1159 is a glycosylation site (O-linked (Fuc...) threonine). Asparagine 1179 carries N-linked (GlcNAc...) asparagine glycosylation. The 37-residue stretch at glutamate 1183–glutamate 1219 folds into the EGF-like 31; calcium-binding domain. O-linked (Glc...) serine glycosylation is present at serine 1189. An O-linked (Fuc...) threonine glycan is attached at threonine 1197. The EGF-like 32; calcium-binding domain occupies asparagine 1221 to glutamate 1265. Residue asparagine 1241 is glycosylated (N-linked (GlcNAc...) asparagine). EGF-like domains lie at aspartate 1267–glutamate 1305, valine 1307–glutamate 1346, aspartate 1348–glutamine 1384, and alanine 1387–histidine 1426. An O-linked (Glc...) serine glycan is attached at serine 1273. Residue threonine 1362 is glycosylated (O-linked (Fuc...) threonine). Threonine 1379 is a glycosylation site (O-linked (GlcNAc...) threonine). O-linked (Fuc...) threonine; alternate glycosylation occurs at threonine 1402. An O-linked (GalNAc...) threonine; alternate glycan is attached at threonine 1402. LNR repeat units lie at residues cysteine 1449–asparagine 1489, cysteine 1490–leucine 1531, and tyrosine 1532–alanine 1571. Residues aspartate 1457, asparagine 1460, aspartate 1475, and aspartate 1478 each contribute to the Ca(2+) site. N-linked (GlcNAc...) asparagine glycosylation occurs at asparagine 1489. Disulfide bonds link cysteine 1490/cysteine 1514, cysteine 1496/cysteine 1509, cysteine 1505/cysteine 1521, cysteine 1536/cysteine 1549, and cysteine 1545/cysteine 1561. An N-linked (GlcNAc...) asparagine glycan is attached at asparagine 1587. Residues proline 1718–arginine 1750 are interaction with PSEN1. Residues leucine 1726 to leucine 1746 traverse the membrane as a helical segment. The Cytoplasmic segment spans residues serine 1747 to lysine 2531. Lysine 1749 participates in a covalent cross-link: Glycyl lysine isopeptide (Lys-Gly) (interchain with G-Cter in ubiquitin). Positions lysine 1770–aspartate 1798 are disordered. The residue at position 1851 (threonine 1851) is a Phosphothreonine. 5 ANK repeats span residues threonine 1917 to isoleucine 1946, methionine 1950 to alanine 1980, aspartate 1984 to alanine 2013, leucine 2017 to methionine 2046, and lysine 2050 to isoleucine 2079. The tract at residues leucine 1937 to asparagine 1945 is HIF1AN-binding. A (3S)-3-hydroxyasparagine; by HIF1AN; partial modification is found at asparagine 1945. Residues leucine 2004–asparagine 2012 are HIF1AN-binding. The residue at position 2012 (asparagine 2012) is a (3S)-3-hydroxyasparagine; by HIF1AN; partial. Disordered stretches follow at residues lysine 2140–serine 2185, glutamine 2382–valine 2428, and proline 2440–lysine 2531. Low complexity predominate over residues glutamine 2382–serine 2395. Over residues proline 2440–leucine 2478 the composition is skewed to polar residues. The segment covering proline 2488–serine 2503 has biased composition (low complexity). A compositionally biased stretch (polar residues) spans asparagine 2504–threonine 2524.

This sequence belongs to the NOTCH family. Heterodimer of a C-terminal fragment N(TM) and an N-terminal fragment N(EC) which are probably linked by disulfide bonds. Interacts with DNER, DTX1, DTX2 and RBPJ/RBPSUH. Also interacts with MAML1, MAML2 and MAML3 which act as transcriptional coactivators for NOTCH1. Notch 1 intracellular domain interacts with SNW1; the interaction involves multimerized NOTCH1 NICD and is implicated in a formation of an intermediate preactivation complex which associates with DNA-bound CBF-1/RBPJ. The activated membrane-bound form interacts with AAK1 which promotes NOTCH1 stabilization. Forms a trimeric complex with FBXW7 and SGK1. Interacts with HIF1AN. HIF1AN negatively regulates the function of notch intracellular domain (NICD), accelerating myogenic differentiation. Interacts (via NICD) with SNAI1 (via zinc fingers); the interaction induces SNAI1 degradation via MDM2-mediated ubiquitination and inhibits SNAI1-induced cell invasion. Interacts (via NICD) with MDM2A. Interacts (via NICD) with BCL6; the interaction decreases MAML1 recruitment by NOTCH1 NICD on target genes DNA and inhibits NOTCH1 transactivation activity. Interacts with THBS4. Interacts (via the EGF-like repeat region) with CCN3 (via CTCK domain). Interacts (via EGF-like domains) with DLL4 (via N-terminal DSL and MNNL domains). Interacts with ZMIZ1. Interacts (via NICD domain) with MEGF10 (via the cytoplasmic domain). Interacts with DLL1 and JAG1. Interacts (via NICD domain) with PRAG1. Forms a complex with PRAG1, N1ICD and MAML1, in a MAML1-dependent manner. Interacts (via transmembrane region) with PSEN1; the interaction is direct. Interacts with ZFP64. Post-translationally, synthesized in the endoplasmic reticulum as an inactive form which is proteolytically cleaved by a furin-like convertase in the trans-Golgi network before it reaches the plasma membrane to yield an active, ligand-accessible form. Cleavage results in a C-terminal fragment N(TM) and a N-terminal fragment N(EC). Following ligand binding, it is cleaved by ADAM17 to yield a membrane-associated intermediate fragment called notch extracellular truncation (NEXT). Following endocytosis, this fragment is then cleaved by one of the catalytic subunits of gamma-secretase (PSEN1 or PSEN2) to release a Notch-derived peptide containing the intracellular domain (NICD) from the membrane. Phosphorylated. In terms of processing, O-linked glycosylation by GALNT11 is involved in determination of left/right symmetry: glycosylation promotes activation of NOTCH1, possibly by promoting cleavage by ADAM17, modulating the balance between motile and immotile (sensory) cilia at the left-right organiser (LRO). O-glycosylated on the EGF-like domains. O-glucosylated at Ser-435 by KDELC1 and KDELC2. Contains both O-linked fucose and O-linked glucose in the EGF-like domains 11, 12 and 13, which are interacting with the residues on DLL4. O-glycosylation at Ser-1027 is only partial. MFNG-, RFNG- and LFNG-mediated modification of O-fucose residues at specific EGF-like domains results in inhibition of its activation by JAG1 and enhancement of its activation by DLL1 via an increased binding to DLL1. Post-translationally, ubiquitinated. Undergoes 'Lys-29'-linked polyubiquitination by ITCH; promotes the lysosomal degradation of non-activated internalized NOTCH1. Deubiquitination by USP12 is required for transport of internalized non-activated receptor from late endosomes to lysosomes for degradation. Monoubiquitination at Lys-1749 is required for activation by gamma-secretase cleavage, it promotes interaction with AAK1, which stabilizes it. Deubiquitination by EIF3F is necessary for nuclear import of activated Notch. Hydroxylated at Asn-1945 and Asn-2012 by HIF1AN. Hydroxylation reduces affinity for HI1AN and may thus indirectly modulate negative regulation of NICD. In terms of tissue distribution, highly expressed in the brain, lung and thymus. Expressed at lower levels in the spleen, bone-marrow, spinal cord, eyes, mammary gland, liver, intestine, skeletal muscle, kidney and heart. In the hair follicle, highly expressed exclusively in the epithelial compartment.

Its subcellular location is the cell membrane. It is found in the late endosome membrane. The protein localises to the nucleus. Functions as a receptor for membrane-bound ligands Jagged-1 (JAG1), Jagged-2 (JAG2) and Delta-1 (DLL1) to regulate cell-fate determination. Upon ligand activation through the released notch intracellular domain (NICD) it forms a transcriptional activator complex with RBPJ/RBPSUH and activates genes of the enhancer of split locus. Affects the implementation of differentiation, proliferation and apoptotic programs. Involved in angiogenesis; negatively regulates endothelial cell proliferation and migration and angiogenic sprouting. Involved in the maturation of both CD4(+) and CD8(+) cells in the thymus. Important for follicular differentiation and possibly cell fate selection within the follicle. During cerebellar development, functions as a receptor for neuronal DNER and is involved in the differentiation of Bergmann glia. Represses neuronal and myogenic differentiation. May play an essential role in postimplantation development, probably in some aspect of cell specification and/or differentiation. May be involved in mesoderm development, somite formation and neurogenesis. May enhance HIF1A function by sequestering HIF1AN away from HIF1A. Required for the THBS4 function in regulating protective astrogenesis from the subventricular zone (SVZ) niche after injury. Involved in determination of left/right symmetry by modulating the balance between motile and immotile (sensory) cilia at the left-right organiser (LRO). In Mus musculus (Mouse), this protein is Neurogenic locus notch homolog protein 1 (Notch1).